The chain runs to 199 residues: Recombination protein RecR (199 aa).

Residues C56–C71 form a C4-type zinc finger. Residues S79–P174 enclose the Toprim domain.

The protein belongs to the RecR family.

May play a role in DNA repair. It seems to be involved in an RecBC-independent recombinational process of DNA repair. It may act with RecF and RecO. This Paenarthrobacter aurescens (strain TC1) protein is Recombination protein RecR.